Here is a 234-residue protein sequence, read N- to C-terminus: Demethylmenaquinone methyltransferase (234 aa).

S-adenosyl-L-methionine contacts are provided by residues threonine 58, aspartate 79, and 106-107 (NA).

It belongs to the class I-like SAM-binding methyltransferase superfamily. MenG/UbiE family.

The catalysed reaction is a 2-demethylmenaquinol + S-adenosyl-L-methionine = a menaquinol + S-adenosyl-L-homocysteine + H(+). The protein operates within quinol/quinone metabolism; menaquinone biosynthesis; menaquinol from 1,4-dihydroxy-2-naphthoate: step 2/2. Functionally, methyltransferase required for the conversion of demethylmenaquinol (DMKH2) to menaquinol (MKH2). This Geobacillus kaustophilus (strain HTA426) protein is Demethylmenaquinone methyltransferase.